A 159-amino-acid polypeptide reads, in one-letter code: ATP synthase subunit b 2 (159 aa).

The chain crosses the membrane as a helical span at residues 1-21; that stretch reads MDATFWALIGLIIFLAILAYL.

It belongs to the ATPase B chain family. F-type ATPases have 2 components, F(1) - the catalytic core - and F(0) - the membrane proton channel. F(1) has five subunits: alpha(3), beta(3), gamma(1), delta(1), epsilon(1). F(0) has three main subunits: a(1), b(2) and c(10-14). The alpha and beta chains form an alternating ring which encloses part of the gamma chain. F(1) is attached to F(0) by a central stalk formed by the gamma and epsilon chains, while a peripheral stalk is formed by the delta and b chains.

Its subcellular location is the cell inner membrane. Its function is as follows. F(1)F(0) ATP synthase produces ATP from ADP in the presence of a proton or sodium gradient. F-type ATPases consist of two structural domains, F(1) containing the extramembraneous catalytic core and F(0) containing the membrane proton channel, linked together by a central stalk and a peripheral stalk. During catalysis, ATP synthesis in the catalytic domain of F(1) is coupled via a rotary mechanism of the central stalk subunits to proton translocation. Functionally, component of the F(0) channel, it forms part of the peripheral stalk, linking F(1) to F(0). The polypeptide is ATP synthase subunit b 2 (Brucella anthropi (strain ATCC 49188 / DSM 6882 / CCUG 24695 / JCM 21032 / LMG 3331 / NBRC 15819 / NCTC 12168 / Alc 37) (Ochrobactrum anthropi)).